The chain runs to 206 residues: MKKLLCAVLLSPLLYSNAVLADDAKQLRETLNGTESLKADFKQTVTDINKKVIQTGAGVFALAHPNQFYWHLTAPDESQIVADGKDLWIYNPFAEEVVIMDFAEAINASPIALLVHRDDATWSQYSVTKKQDCYEIKPKSTDAGITSVNVCFNNGTLNKFNVLDDKGNLSQFDLSNQHSISAADKSLFKFVLPENVDVDDQRLKTQ.

An N-terminal signal peptide occupies residues 1 to 21 (MKKLLCAVLLSPLLYSNAVLA).

It belongs to the LolA family. As to quaternary structure, monomer.

It is found in the periplasm. In terms of biological role, participates in the translocation of lipoproteins from the inner membrane to the outer membrane. Only forms a complex with a lipoprotein if the residue after the N-terminal Cys is not an aspartate (The Asp acts as a targeting signal to indicate that the lipoprotein should stay in the inner membrane). The protein is Outer-membrane lipoprotein carrier protein of Shewanella sp. (strain MR-7).